A 740-amino-acid chain; its full sequence is Ion-translocating oxidoreductase complex subunit C (740 aa).

4Fe-4S ferredoxin-type domains lie at 369-397 (GEPQEEQSCIRCSACADACPADLLPQQLY) and 407-436 (KATTHNIADCIECGACAWVCPSNIPLVQYF). [4Fe-4S] cluster-binding residues include C377, C380, C383, C387, C416, C419, C422, and C426. 2 disordered regions span residues 602 to 621 (KLEQQQANAKPEEQVDPRKA) and 660 to 718 (ARAK…RKAA). Positions 611–621 (KPEEQVDPRKA) are enriched in basic and acidic residues.

It belongs to the 4Fe4S bacterial-type ferredoxin family. RnfC subfamily. As to quaternary structure, the complex is composed of six subunits: RsxA, RsxB, RsxC, RsxD, RsxE and RsxG. Requires [4Fe-4S] cluster as cofactor.

The protein resides in the cell inner membrane. Its function is as follows. Part of a membrane-bound complex that couples electron transfer with translocation of ions across the membrane. Required to maintain the reduced state of SoxR. The sequence is that of Ion-translocating oxidoreductase complex subunit C from Escherichia coli O9:H4 (strain HS).